Consider the following 301-residue polypeptide: MESMTLHPPSETANADIDVVLVTGLSGAGRGTTAKVLEDLGWYVADNLPPELITRMVDLGLAAGSRITQLAVVMDVRSRGFTGDLESVRADLATRGISPRVLFLEASDESLVRRYENNRRSHPLQGGQTLAEGIAAERALLSSIRASADLVIDTSSLPVPALRAAIERAFSSESVAHISVTVESFGFKYGLPMDADMVVDVRFLPNPHWVDELRPHTGQHPSVSHYVLSQPGADEFLDTYHRLLNLVIDGYRREGKRYMTIAVGCTGGKHRSVAITEALAASLAPDDDLSVRVLHRDLGRE.

An ATP-binding site is contributed by 24–31 (GLSGAGRG). 75–78 (DVRS) provides a ligand contact to GTP.

Belongs to the RapZ-like family.

In terms of biological role, displays ATPase and GTPase activities. The protein is Nucleotide-binding protein MAB_2783c of Mycobacteroides abscessus (strain ATCC 19977 / DSM 44196 / CCUG 20993 / CIP 104536 / JCM 13569 / NCTC 13031 / TMC 1543 / L948) (Mycobacterium abscessus).